A 117-amino-acid chain; its full sequence is NADH-ubiquinone oxidoreductase chain 3 (117 aa).

3 helical membrane-spanning segments follow: residues 4-24, 60-80, and 86-106; these read IIIIASVILLITTVVMFLASI, ITIIFLIFDVEIALILPMIII, and IMIWTITSIIFILILLIGLYH.

This sequence belongs to the complex I subunit 3 family.

It localises to the mitochondrion membrane. It catalyses the reaction a ubiquinone + NADH + 5 H(+)(in) = a ubiquinol + NAD(+) + 4 H(+)(out). Its function is as follows. Core subunit of the mitochondrial membrane respiratory chain NADH dehydrogenase (Complex I) that is believed to belong to the minimal assembly required for catalysis. Complex I functions in the transfer of electrons from NADH to the respiratory chain. The immediate electron acceptor for the enzyme is believed to be ubiquinone. The polypeptide is NADH-ubiquinone oxidoreductase chain 3 (mt:ND3) (Drosophila yakuba (Fruit fly)).